The chain runs to 376 residues: ATP phosphoribosyltransferase regulatory subunit (376 aa).

It belongs to the class-II aminoacyl-tRNA synthetase family. HisZ subfamily. As to quaternary structure, heteromultimer composed of HisG and HisZ subunits.

The protein resides in the cytoplasm. Its pathway is amino-acid biosynthesis; L-histidine biosynthesis; L-histidine from 5-phospho-alpha-D-ribose 1-diphosphate: step 1/9. Its function is as follows. Required for the first step of histidine biosynthesis. May allow the feedback regulation of ATP phosphoribosyltransferase activity by histidine. The chain is ATP phosphoribosyltransferase regulatory subunit from Brucella anthropi (strain ATCC 49188 / DSM 6882 / CCUG 24695 / JCM 21032 / LMG 3331 / NBRC 15819 / NCTC 12168 / Alc 37) (Ochrobactrum anthropi).